The chain runs to 388 residues: Na(+)/H(+) antiporter NhaA (388 aa).

Over 1-11 (MKHLHRFFSSD) the chain is Cytoplasmic. The chain crosses the membrane as a helical span at residues 12–31 (ASGGIILIIAAVLAMIMANS). The Periplasmic portion of the chain corresponds to 32 to 58 (GATSGWYHDFLETPVQLRVGTLEINKN). The helical transmembrane segment at 59 to 80 (MLLWINDALMAVFFLLVGLEVK) threads the bilayer. The Cytoplasmic segment spans residues 81-96 (RELMQGSLASLRQAAF). Residues 97-116 (PVIAAIGGMIVPALLYLAFN) form a helical membrane-spanning segment. Residues 117–122 (YADPIT) are Periplasmic-facing. Residues 123-130 (REGWAIPA) traverse the membrane as a helical segment. The Cytoplasmic segment spans residues 131–154 (ATDIAFALGVLALLGSRVPLALKI). Residues 155–176 (FLMALAIIDDLGAIIIIALFYT) form a helical membrane-spanning segment. Topologically, residues 177–180 (NDLS) are periplasmic. A helical membrane pass occupies residues 181 to 200 (MASLGVAAVAIAVLAVLNLC). At 201-204 (GVRR) the chain is on the cytoplasmic side. The chain crosses the membrane as a helical span at residues 205-222 (TGVYILVGVVLWTAVLKS). A topological domain (periplasmic) is located at residue Gly223. Residues 224–236 (VHATLAGVIVGFF) traverse the membrane as a helical segment. At 237-253 (IPLKEKHGRSPAKRLEH) the chain is on the cytoplasmic side. Residues 254 to 272 (VLHPWVAYLILPLFAFANA) form a helical membrane-spanning segment. Residues 273-286 (GVSLQGVTLEGLTS) are Periplasmic-facing. Residues 287 to 310 (ILPLGIIAGLLIGKPLGISLFCWL) traverse the membrane as a helical segment. Residues 311–339 (ALRLKLAHLPEGTTYQQIMAVGILCGIGF) lie on the Cytoplasmic side of the membrane. A helical membrane pass occupies residues 340–350 (TMSIFIASLAF). Residues 351–357 (GSVDPEL) are Periplasmic-facing. The chain crosses the membrane as a helical span at residues 358-380 (INWAKLGILVGSISSAVIGYSWL). The Cytoplasmic portion of the chain corresponds to 381-388 (RVRLRPSV).

It belongs to the NhaA Na(+)/H(+) (TC 2.A.33) antiporter family.

Its subcellular location is the cell inner membrane. The enzyme catalyses Na(+)(in) + 2 H(+)(out) = Na(+)(out) + 2 H(+)(in). Functionally, na(+)/H(+) antiporter that extrudes sodium in exchange for external protons. This chain is Na(+)/H(+) antiporter NhaA, found in Escherichia coli O6:K15:H31 (strain 536 / UPEC).